Here is a 232-residue protein sequence, read N- to C-terminus: GTP cyclohydrolase III (232 aa).

Belongs to the archaeal-type GTP cyclohydrolase family.

The catalysed reaction is GTP + 3 H2O = 2-amino-5-formylamino-6-(5-phospho-D-ribosylamino)pyrimidin-4(3H)-one + 2 phosphate + 2 H(+). Functionally, catalyzes the formation of 2-amino-5-formylamino-6-ribofuranosylamino-4(3H)-pyrimidinone ribonucleotide monophosphate and inorganic phosphate from GTP. Also has an independent pyrophosphate phosphohydrolase activity. This Saccharolobus islandicus (strain Y.G.57.14 / Yellowstone #1) (Sulfolobus islandicus) protein is GTP cyclohydrolase III.